The chain runs to 216 residues: Ribosomal RNA small subunit methyltransferase G (216 aa).

Residues glycine 83, methionine 88, 134 to 135 (VE), and arginine 149 contribute to the S-adenosyl-L-methionine site.

The protein belongs to the methyltransferase superfamily. RNA methyltransferase RsmG family.

The protein resides in the cytoplasm. It catalyses the reaction guanosine(527) in 16S rRNA + S-adenosyl-L-methionine = N(7)-methylguanosine(527) in 16S rRNA + S-adenosyl-L-homocysteine. Functionally, specifically methylates the N7 position of guanine in position 527 of 16S rRNA. The polypeptide is Ribosomal RNA small subunit methyltransferase G (Pseudomonas putida (strain GB-1)).